The following is a 212-amino-acid chain: Imidazole glycerol phosphate synthase subunit HisH (212 aa).

The Glutamine amidotransferase type-1 domain occupies Arg3–Thr208. The active-site Nucleophile is the Cys81. Catalysis depends on residues His183 and Glu185.

As to quaternary structure, heterodimer of HisH and HisF.

It is found in the cytoplasm. The catalysed reaction is 5-[(5-phospho-1-deoxy-D-ribulos-1-ylimino)methylamino]-1-(5-phospho-beta-D-ribosyl)imidazole-4-carboxamide + L-glutamine = D-erythro-1-(imidazol-4-yl)glycerol 3-phosphate + 5-amino-1-(5-phospho-beta-D-ribosyl)imidazole-4-carboxamide + L-glutamate + H(+). It catalyses the reaction L-glutamine + H2O = L-glutamate + NH4(+). It functions in the pathway amino-acid biosynthesis; L-histidine biosynthesis; L-histidine from 5-phospho-alpha-D-ribose 1-diphosphate: step 5/9. Functionally, IGPS catalyzes the conversion of PRFAR and glutamine to IGP, AICAR and glutamate. The HisH subunit catalyzes the hydrolysis of glutamine to glutamate and ammonia as part of the synthesis of IGP and AICAR. The resulting ammonia molecule is channeled to the active site of HisF. The polypeptide is Imidazole glycerol phosphate synthase subunit HisH (Symbiobacterium thermophilum (strain DSM 24528 / JCM 14929 / IAM 14863 / T)).